The following is a 423-amino-acid chain: MHDVDFIKRNPELFDYAMQNRNYEKVAQKIIELDIKKKQLLTQLYSLQKERNQITREIEKLKKDGVKCDTQIESSKNITEKINDINNMIKEDSQLIDLLNVLPNVPDDIVPVGKDESSNVEIRKHGYKRNFDFQVKTHYELGEKLNLMDFKQAAKLSGSRFVILKNQLAQLDRALANFMLDIHTKEFGYSEISHPILVHESAMYGVGQLPKFADDSFKTTENFRLVPTSEVALTNLVSGMNINSCDLPIRLTACSPCFRLEAGSAGKDTRGMMRQHQFNKVELVSIVTEEQSASELERMVQVAEEVLKRLELPYRVMMLCTGDMGFSASITYDIEVWVPSQNRYREISSCSNCKDFQARRMNTKYTTITNNVKVSKFAHTLNGSALAIGRTIIAILENYQNMDGSITIPLALRKYMNDQEFIK.

Position 228–230 (228–230) interacts with L-serine; sequence TSE. Residue 259–261 coordinates ATP; sequence RLE. Residue Glu-282 coordinates L-serine. 346 to 349 lines the ATP pocket; it reads EISS. Position 384 (Ser-384) interacts with L-serine.

This sequence belongs to the class-II aminoacyl-tRNA synthetase family. Type-1 seryl-tRNA synthetase subfamily. As to quaternary structure, homodimer. The tRNA molecule binds across the dimer.

It is found in the cytoplasm. It catalyses the reaction tRNA(Ser) + L-serine + ATP = L-seryl-tRNA(Ser) + AMP + diphosphate + H(+). It carries out the reaction tRNA(Sec) + L-serine + ATP = L-seryl-tRNA(Sec) + AMP + diphosphate + H(+). It participates in aminoacyl-tRNA biosynthesis; selenocysteinyl-tRNA(Sec) biosynthesis; L-seryl-tRNA(Sec) from L-serine and tRNA(Sec): step 1/1. Its function is as follows. Catalyzes the attachment of serine to tRNA(Ser). Is also able to aminoacylate tRNA(Sec) with serine, to form the misacylated tRNA L-seryl-tRNA(Sec), which will be further converted into selenocysteinyl-tRNA(Sec). The sequence is that of Serine--tRNA ligase from Ehrlichia canis (strain Jake).